Reading from the N-terminus, the 314-residue chain is CD-NTase-associated protein 12 (314 aa).

The region spanning 5–129 (RIFIGSSSEE…VKGISLARFK (125 aa)) is the TIR domain. An STING domain region spans residues 160-314 (SSTLAAVYYE…DLIKIVDEDN (155 aa)). 3',3'-c-di-GMP-binding residues include F171, P234, and D252.

The protein in the C-terminal section; belongs to the bacterial STING family. In terms of assembly, homodimer. Forms homodimers; in the presence of c-di-GMP forms filaments with an ordered array of parallel-stacked subunits.

The catalysed reaction is NAD(+) + H2O = ADP-D-ribose + nicotinamide + H(+). With respect to regulation, NAD(+) hydrolase activity is strongly stimulated by c-di-GMP, weakly by 3'3'-cGAMP, very weakly by c-di-AMP but not at all by 2'3'-cGAMP. Self-association of TIR domains is required for NADase activity. Effector protein of a CBASS antiviral system with NAD(+) hydrolase activity. CBASS (cyclic oligonucleotide-based antiphage signaling system) provides immunity against bacteriophage. The CD-NTase protein synthesizes cyclic nucleotides in response to infection; these serve as specific second messenger signals. The signals activate a diverse range of effectors, leading to bacterial cell death and thus abortive phage infection. A type I-(GG) CBASS system. Functionally, binds c-di-GMP (synthesized by the cognate CdnE encoded upstream in the same operon), and about 10-fold less well 3'3'-cGAMP, but not c-di-AMP, 2'-3'-cGAMP or cUMP-AMP (tested without the N-terminal TIR domain). Upon activation by c-di-GMP forms filaments which hydrolyze NAD(+); filament formation is required for enzyme activation. The sequence is that of CD-NTase-associated protein 12 from Capnocytophaga granulosa (strain ATCC 51502 / DSM 11449 / JCM 8566 / LMG 16022 / NCTC 12948 / B0611).